The sequence spans 556 residues: Formate--tetrahydrofolate ligase (556 aa).

65–72 (TPAGEGKT) contacts ATP.

The protein belongs to the formate--tetrahydrofolate ligase family.

It catalyses the reaction (6S)-5,6,7,8-tetrahydrofolate + formate + ATP = (6R)-10-formyltetrahydrofolate + ADP + phosphate. Its pathway is one-carbon metabolism; tetrahydrofolate interconversion. The chain is Formate--tetrahydrofolate ligase from Agathobacter rectalis (strain ATCC 33656 / DSM 3377 / JCM 17463 / KCTC 5835 / VPI 0990) (Eubacterium rectale).